The chain runs to 226 residues: PKHD-type hydroxylase MADE_1018490 (226 aa).

The 101-residue stretch at 77–177 (RIFPPCFNRY…RIAAITWIQS (101 aa)) folds into the Fe2OG dioxygenase domain. His95, Asp97, and His158 together coordinate Fe cation. Arg168 is a binding site for 2-oxoglutarate.

It depends on Fe(2+) as a cofactor. The cofactor is L-ascorbate.

This is PKHD-type hydroxylase MADE_1018490 from Alteromonas mediterranea (strain DSM 17117 / CIP 110805 / LMG 28347 / Deep ecotype).